Here is a 233-residue protein sequence, read N- to C-terminus: Large ribosomal subunit protein uL1 (233 aa).

This sequence belongs to the universal ribosomal protein uL1 family. Part of the 50S ribosomal subunit.

Functionally, binds directly to 23S rRNA. The L1 stalk is quite mobile in the ribosome, and is involved in E site tRNA release. Its function is as follows. Protein L1 is also a translational repressor protein, it controls the translation of the L11 operon by binding to its mRNA. In Hamiltonella defensa subsp. Acyrthosiphon pisum (strain 5AT), this protein is Large ribosomal subunit protein uL1.